Here is a 59-residue protein sequence, read N- to C-terminus: Large ribosomal subunit protein bL32 (59 aa).

The disordered stretch occupies residues 1-20; it reads MAVQQNKKSKSKKGMRRSHD. Residues 7–19 are compositionally biased toward basic residues; that stretch reads KKSKSKKGMRRSH.

The protein belongs to the bacterial ribosomal protein bL32 family.

The protein is Large ribosomal subunit protein bL32 of Nitratidesulfovibrio vulgaris (strain DSM 19637 / Miyazaki F) (Desulfovibrio vulgaris).